The sequence spans 360 residues: MVDKINLEGWMRPSIRTLKAYESKSIPDCVRLDANENPLPWPPGMIEQLLGSDIAFNRYPDGGAQELKEALSRYTGVPAEGILTGNGSDELIQLLMTTFGGEKGAVVIHPPTFSMYEAAARVTGTGVLEVPLLLTETGRDFRLDVEGMLKAAAQPQVHMIVLCNPNNPTGTLFPREEILRIVAESGKIVIVDEAYGEFSGESVVDQIPYCPNLLVMKTFSKLFAMAALRLGYLLGQPSIIGALNRARQPFNVNSFSQKAGAIALNYGKEYAEQGRILTAELAKIVEALTAFASVKVFATRANFVLFQPEDPDRVYQELIGKGFLIRNMGNLPLVGKALRLSAGSPEDNERLIKALGEILK.

The residue at position 221 (Lys221) is an N6-(pyridoxal phosphate)lysine.

It belongs to the class-II pyridoxal-phosphate-dependent aminotransferase family. Histidinol-phosphate aminotransferase subfamily. Homodimer. Pyridoxal 5'-phosphate serves as cofactor.

It catalyses the reaction L-histidinol phosphate + 2-oxoglutarate = 3-(imidazol-4-yl)-2-oxopropyl phosphate + L-glutamate. It participates in amino-acid biosynthesis; L-histidine biosynthesis; L-histidine from 5-phospho-alpha-D-ribose 1-diphosphate: step 7/9. The sequence is that of Histidinol-phosphate aminotransferase from Desulfitobacterium hafniense (strain Y51).